A 545-amino-acid chain; its full sequence is Ubiquitin carboxyl-terminal hydrolase 17-like protein C (545 aa).

Positions 51–348 (CGLQNTGNSC…NAYVLFYVQQ (298 aa)) constitute a USP domain. Cysteine 60 serves as the catalytic Nucleophile. Histidine 307 functions as the Proton acceptor in the catalytic mechanism. Disordered regions lie at residues 368–442 (DPEY…QKLG) and 489–539 (WGRD…KQGQ). Over residues 374-385 (KKSRRKKHKKKS) the composition is skewed to basic residues. Basic and acidic residues-rich tracts occupy residues 393 to 404 (EPCKNREKRATK) and 489 to 505 (WGRD…HNAD). Positions 508–519 (LTSQDPVNTGQL) are enriched in polar residues. Over residues 524–537 (GRRRSKKGKNKNKQ) the composition is skewed to basic residues.

Belongs to the peptidase C19 family. USP17 subfamily. In terms of tissue distribution, expressed in T cells.

It localises to the nucleus. The protein resides in the endoplasmic reticulum. The enzyme catalyses Thiol-dependent hydrolysis of ester, thioester, amide, peptide and isopeptide bonds formed by the C-terminal Gly of ubiquitin (a 76-residue protein attached to proteins as an intracellular targeting signal).. Deubiquitinating enzyme that removes conjugated ubiquitin from specific proteins to regulate different cellular processes. Important for preimplantation stage embryonic development. The sequence is that of Ubiquitin carboxyl-terminal hydrolase 17-like protein C from Mus musculus (Mouse).